The following is a 705-amino-acid chain: Polyribonucleotide nucleotidyltransferase (705 aa).

Mg(2+) is bound by residues D486 and D492. One can recognise a KH domain in the interval 553–612 (PRIHTIRINPDKIKDVIGKGGSVIRALTEETGTTIEIEDDGTVKIAATDGEKAKFAIRRI). Residues 622-690 (GRIYQGKVTR…RQGRVRLSIK (69 aa)) form the S1 motif domain.

It belongs to the polyribonucleotide nucleotidyltransferase family. In terms of assembly, component of the RNA degradosome, which is a multiprotein complex involved in RNA processing and mRNA degradation. Mg(2+) is required as a cofactor.

Its subcellular location is the cytoplasm. The catalysed reaction is RNA(n+1) + phosphate = RNA(n) + a ribonucleoside 5'-diphosphate. Involved in mRNA degradation. Catalyzes the phosphorolysis of single-stranded polyribonucleotides processively in the 3'- to 5'-direction. In Serratia proteamaculans (strain 568), this protein is Polyribonucleotide nucleotidyltransferase.